Consider the following 527-residue polypeptide: RUS family member 1 (527 aa).

N21 carries N-linked (GlcNAc...) asparagine glycosylation. The helical transmembrane segment at 220–240 (SQETAVNLVGMLLSVIVSSFI) threads the bilayer. N-linked (GlcNAc...) asparagine glycosylation occurs at N243. Residues 245-265 (SLIVTWLVFLFFTSLHLFCNY) form a helical membrane-spanning segment. N-linked (GlcNAc...) asparagine glycosylation is present at N346. A disordered region spans residues 350–426 (TKNVNNNNNN…NNNNNNNNNK (77 aa)). N-linked (GlcNAc...) asparagine glycans are attached at residues N467 and N497.

It belongs to the RUS1 family.

Its subcellular location is the membrane. This Dictyostelium discoideum (Social amoeba) protein is RUS family member 1 (rusf1).